A 154-amino-acid chain; its full sequence is Endoribonuclease YbeY (154 aa).

Zn(2+)-binding residues include H113, H117, and H123.

This sequence belongs to the endoribonuclease YbeY family. Zn(2+) serves as cofactor.

It is found in the cytoplasm. Functionally, single strand-specific metallo-endoribonuclease involved in late-stage 70S ribosome quality control and in maturation of the 3' terminus of the 16S rRNA. The polypeptide is Endoribonuclease YbeY (Aeromonas salmonicida (strain A449)).